The sequence spans 141 residues: Galactose-6-phosphate isomerase subunit LacA 1 (141 aa).

This sequence belongs to the LacAB/RpiB family. Heteromultimeric protein consisting of LacA and LacB.

The enzyme catalyses aldehydo-D-galactose 6-phosphate = keto-D-tagatose 6-phosphate. It functions in the pathway carbohydrate metabolism; D-galactose 6-phosphate degradation; D-tagatose 6-phosphate from D-galactose 6-phosphate: step 1/1. The polypeptide is Galactose-6-phosphate isomerase subunit LacA 1 (Streptococcus pyogenes serotype M3 (strain SSI-1)).